The following is a 147-amino-acid chain: Hemoglobin subunit beta (147 aa).

The Globin domain maps to 3-147; sequence LLSAEENAHV…VANALAHKYH (145 aa). Residue T13 is modified to Phosphothreonine. S45 is subject to Phosphoserine. N6-acetyllysine is present on K60. A heme b-binding site is contributed by H64. K83 carries the N6-acetyllysine modification. A heme b-binding site is contributed by H93. S-nitrosocysteine is present on C94. An N6-acetyllysine modification is found at K145.

Belongs to the globin family. Heterotetramer of two alpha chains and two beta chains. In terms of tissue distribution, red blood cells.

Its function is as follows. Involved in oxygen transport from the lung to the various peripheral tissues. The protein is Hemoglobin subunit beta (HBB) of Eulemur fulvus fulvus (Brown lemur).